The sequence spans 157 residues: Ribosome maturation factor RimP (157 aa).

The protein belongs to the RimP family.

It localises to the cytoplasm. Required for maturation of 30S ribosomal subunits. The chain is Ribosome maturation factor RimP from Thermosynechococcus vestitus (strain NIES-2133 / IAM M-273 / BP-1).